Reading from the N-terminus, the 1027-residue chain is INO80 complex subunit D (1027 aa).

A Glycyl lysine isopeptide (Lys-Gly) (interchain with G-Cter in SUMO2) cross-link involves residue Lys87. Ser132 is modified (phosphoserine). 5 disordered regions span residues 193-278 (HFSP…VDPP), 519-574 (RGDN…LSMP), 813-850 (RQQY…HTTS), 914-969 (LSTS…TSPK), and 982-1027 (QLSS…PSPN). A compositionally biased stretch (low complexity) spans 201 to 216 (SQQQPPQQHSHLSPLS). The span at 229–257 (VCKSPQPQNTSLPMQGVAPTTHTIAQARQ) shows a compositional bias: polar residues. Residues 525 to 559 (KVQHQQQRKPRKKTKPPALTKKHKKKRRRGPRRPQ) are compositionally biased toward basic residues. A compositionally biased stretch (low complexity) spans 914–932 (LSTSLSTPPTTSNSETTQP). Residues 937 to 954 (VTPSSSSVLPGLPQTSFS) show a composition bias toward polar residues. Low complexity predominate over residues 1001–1027 (APPTGFTVTGATATSTNNASSPFPSPN).

It belongs to the INO80D family. Component of the chromatin remodeling INO80 complex; specifically part of a complex module associated with the N-terminus of INO80.

The protein resides in the nucleus. Its function is as follows. Putative regulatory component of the chromatin remodeling INO80 complex which is involved in transcriptional regulation, DNA replication and probably DNA repair. The sequence is that of INO80 complex subunit D from Homo sapiens (Human).